The primary structure comprises 807 residues: Glycerol-3-phosphate acyltransferase (807 aa).

The HXXXXD motif signature appears at 305-310; the sequence is CHRSHM.

Belongs to the GPAT/DAPAT family.

It localises to the cell inner membrane. The catalysed reaction is sn-glycerol 3-phosphate + an acyl-CoA = a 1-acyl-sn-glycero-3-phosphate + CoA. It participates in phospholipid metabolism; CDP-diacylglycerol biosynthesis; CDP-diacylglycerol from sn-glycerol 3-phosphate: step 1/3. The polypeptide is Glycerol-3-phosphate acyltransferase (Aliivibrio salmonicida (strain LFI1238) (Vibrio salmonicida (strain LFI1238))).